A 97-amino-acid chain; its full sequence is Aspartyl/glutamyl-tRNA(Asn/Gln) amidotransferase subunit C (97 aa).

It belongs to the GatC family. As to quaternary structure, heterotrimer of A, B and C subunits.

It catalyses the reaction L-glutamyl-tRNA(Gln) + L-glutamine + ATP + H2O = L-glutaminyl-tRNA(Gln) + L-glutamate + ADP + phosphate + H(+). The catalysed reaction is L-aspartyl-tRNA(Asn) + L-glutamine + ATP + H2O = L-asparaginyl-tRNA(Asn) + L-glutamate + ADP + phosphate + 2 H(+). Its function is as follows. Allows the formation of correctly charged Asn-tRNA(Asn) or Gln-tRNA(Gln) through the transamidation of misacylated Asp-tRNA(Asn) or Glu-tRNA(Gln) in organisms which lack either or both of asparaginyl-tRNA or glutaminyl-tRNA synthetases. The reaction takes place in the presence of glutamine and ATP through an activated phospho-Asp-tRNA(Asn) or phospho-Glu-tRNA(Gln). This chain is Aspartyl/glutamyl-tRNA(Asn/Gln) amidotransferase subunit C, found in Prochlorococcus marinus (strain MIT 9515).